A 286-amino-acid chain; its full sequence is Probable biotin transporter (286 aa).

2 consecutive EamA domains span residues 3–128 (YLLF…AIIR) and 139–277 (GFLL…LWVN). 10 helical membrane-spanning segments follow: residues 4–24 (LLFVTVLWAFSFNLIGEYLAG), 26–46 (VDSYFAVLTRVLLAGLVFLPL), 56–76 (FVGGVMLVGALQFGITYVCLY), 81–101 (VLTVPEVLLFTVLTPVHVALF), 109–129 (FNFWALAAALVAVLGAAIIRY), 136–156 (FLQGFLLLQLANATFAAGQVL), 174–194 (FGYFFVGALLVALPAWLLFGD), 203–223 (LQWGVLVWMGLLATALGQFWW), 234–254 (TLAVMNNLHVPVGLLLNLLIW), and 258–280 (ADLPRLALGGAVIVASLWVNRLG).

It belongs to the drug/metabolite transporter (DMT) superfamily. 10 TMS drug/metabolite exporter (DME) (TC 2.A.7.3) family.

It is found in the cell inner membrane. It carries out the reaction biotin(in) = biotin(out). Functionally, uptake of biotin. The chain is Probable biotin transporter from Pseudomonas aeruginosa (strain ATCC 15692 / DSM 22644 / CIP 104116 / JCM 14847 / LMG 12228 / 1C / PRS 101 / PAO1).